The chain runs to 428 residues: Dihydroorotase (428 aa).

Residues histidine 59 and histidine 61 each contribute to the Zn(2+) site. Substrate-binding positions include 61–63 (HLR) and asparagine 93. Zn(2+) is bound by residues aspartate 151, histidine 178, and histidine 231. A substrate-binding site is contributed by asparagine 277. Residue aspartate 304 coordinates Zn(2+). The active site involves aspartate 304. Residues histidine 308 and 322 to 323 (FG) each bind substrate.

It belongs to the metallo-dependent hydrolases superfamily. DHOase family. Class I DHOase subfamily. Zn(2+) serves as cofactor.

The enzyme catalyses (S)-dihydroorotate + H2O = N-carbamoyl-L-aspartate + H(+). It functions in the pathway pyrimidine metabolism; UMP biosynthesis via de novo pathway; (S)-dihydroorotate from bicarbonate: step 3/3. Catalyzes the reversible cyclization of carbamoyl aspartate to dihydroorotate. This chain is Dihydroorotase, found in Bacillus anthracis (strain A0248).